Consider the following 186-residue polypeptide: MTGEGSATILLGIDPGSRITGYGVVDVATPTPRYVASGCIRIKSDQLAQKLAQVYAGIGELIGLHRPHEIAIEQVFMSKNADSALKLGQARGTAIVCAANHGLEVFEYAPTQIKQAVTGTGAATKEQVQHMVTAILGLDGVPQADAADALAIALTHAYARQGRSLPPSRGRRRSGSRQRWRDYRPS.

Residues D14, E73, and D145 contribute to the active site. 3 residues coordinate Mg(2+): D14, E73, and D145. Positions 162 to 186 (GRSLPPSRGRRRSGSRQRWRDYRPS) are disordered. Over residues 169 to 178 (RGRRRSGSRQ) the composition is skewed to basic residues.

It belongs to the RuvC family. Homodimer which binds Holliday junction (HJ) DNA. The HJ becomes 2-fold symmetrical on binding to RuvC with unstacked arms; it has a different conformation from HJ DNA in complex with RuvA. In the full resolvosome a probable DNA-RuvA(4)-RuvB(12)-RuvC(2) complex forms which resolves the HJ. Requires Mg(2+) as cofactor.

The protein localises to the cytoplasm. The enzyme catalyses Endonucleolytic cleavage at a junction such as a reciprocal single-stranded crossover between two homologous DNA duplexes (Holliday junction).. Functionally, the RuvA-RuvB-RuvC complex processes Holliday junction (HJ) DNA during genetic recombination and DNA repair. Endonuclease that resolves HJ intermediates. Cleaves cruciform DNA by making single-stranded nicks across the HJ at symmetrical positions within the homologous arms, yielding a 5'-phosphate and a 3'-hydroxyl group; requires a central core of homology in the junction. The consensus cleavage sequence is 5'-(A/T)TT(C/G)-3'. Cleavage occurs on the 3'-side of the TT dinucleotide at the point of strand exchange. HJ branch migration catalyzed by RuvA-RuvB allows RuvC to scan DNA until it finds its consensus sequence, where it cleaves and resolves the cruciform DNA. This chain is Crossover junction endodeoxyribonuclease RuvC, found in Chromohalobacter salexigens (strain ATCC BAA-138 / DSM 3043 / CIP 106854 / NCIMB 13768 / 1H11).